A 366-amino-acid polypeptide reads, in one-letter code: Protein sigma-NS (366 aa).

Residues 1–11 (MASSLRAAISK) form an important for ssRNA-binding and formation of complexes region.

The protein belongs to the orthoreovirus sigma-NS protein family. In terms of assembly, homooligomer; in presence of RNA. Interacts with protein mu-NS; this interaction allows the localization of sigma-NS to the viral factories. Interacts with host G3BP1 (via C-terminus); this interaction induces the relocalization of G3BP1 and other SG proteins to the viral factories periphery.

It localises to the host cytoplasm. Functionally, protein that binds to ssRNA and participates with protein mu-NS in forming the matrix of viral factories, which are large inclusions in the host cytoplasm where replication intermediates are assembled and viral RNA replication takes place. Plays a role in the inhibition of the integrated stress response (ISR) to escape from host cell translational shutoff. Participates in the disruption of stress granules (SG) through its association with host G3BP1 and mu-NS. The sequence is that of Protein sigma-NS (S3) from Mammalia (T2J).